The following is a 249-amino-acid chain: Ribonuclease PH (249 aa).

Phosphate-binding positions include Arg86 and 124–126; that span reads GTR.

Belongs to the RNase PH family. In terms of assembly, homohexameric ring arranged as a trimer of dimers.

It carries out the reaction tRNA(n+1) + phosphate = tRNA(n) + a ribonucleoside 5'-diphosphate. In terms of biological role, phosphorolytic 3'-5' exoribonuclease that plays an important role in tRNA 3'-end maturation. Removes nucleotide residues following the 3'-CCA terminus of tRNAs; can also add nucleotides to the ends of RNA molecules by using nucleoside diphosphates as substrates, but this may not be physiologically important. Probably plays a role in initiation of 16S rRNA degradation (leading to ribosome degradation) during starvation. The sequence is that of Ribonuclease PH from Clostridium botulinum (strain Eklund 17B / Type B).